The primary structure comprises 499 residues: Lysine--tRNA ligase (499 aa).

2 residues coordinate Mg(2+): Glu-408 and Glu-415.

It belongs to the class-II aminoacyl-tRNA synthetase family. Homodimer. It depends on Mg(2+) as a cofactor.

It localises to the cytoplasm. It carries out the reaction tRNA(Lys) + L-lysine + ATP = L-lysyl-tRNA(Lys) + AMP + diphosphate. In Thermoanaerobacter sp. (strain X514), this protein is Lysine--tRNA ligase.